Here is a 334-residue protein sequence, read N- to C-terminus: Glyceraldehyde-3-phosphate dehydrogenase (334 aa).

Residues 10 to 11, Asp33, Lys77, and Thr119 contribute to the NAD(+) site; that span reads RI. D-glyceraldehyde 3-phosphate is bound by residues 149-151, Thr180, 209-210, and Arg232; these read SCT and TG. Residue Cys150 is the Nucleophile of the active site. Asn314 serves as a coordination point for NAD(+).

It belongs to the glyceraldehyde-3-phosphate dehydrogenase family. Homotetramer.

It localises to the cytoplasm. The enzyme catalyses D-glyceraldehyde 3-phosphate + phosphate + NAD(+) = (2R)-3-phospho-glyceroyl phosphate + NADH + H(+). It participates in carbohydrate degradation; glycolysis; pyruvate from D-glyceraldehyde 3-phosphate: step 1/5. In terms of biological role, catalyzes the oxidative phosphorylation of glyceraldehyde 3-phosphate (G3P) to 1,3-bisphosphoglycerate (BPG) using the cofactor NAD. The first reaction step involves the formation of a hemiacetal intermediate between G3P and a cysteine residue, and this hemiacetal intermediate is then oxidized to a thioester, with concomitant reduction of NAD to NADH. The reduced NADH is then exchanged with the second NAD, and the thioester is attacked by a nucleophilic inorganic phosphate to produce BPG. In Chlamydia trachomatis serovar L2 (strain ATCC VR-902B / DSM 19102 / 434/Bu), this protein is Glyceraldehyde-3-phosphate dehydrogenase (gap).